Here is a 208-residue protein sequence, read N- to C-terminus: Large ribosomal subunit protein uL3 (208 aa).

The disordered stretch occupies residues 123–147 (RHGQSRGPMAHGSRYHRRPGSMGPV).

This sequence belongs to the universal ribosomal protein uL3 family. Part of the 50S ribosomal subunit. Forms a cluster with proteins L14 and L19.

In terms of biological role, one of the primary rRNA binding proteins, it binds directly near the 3'-end of the 23S rRNA, where it nucleates assembly of the 50S subunit. This is Large ribosomal subunit protein uL3 from Streptococcus sanguinis (strain SK36).